The chain runs to 347 residues: Dihydroorotate dehydrogenase (quinone) (347 aa).

Residues 61-65 (AGLDK) and T85 contribute to the FMN site. Substrate is bound at residue K65. 110-114 (NRMGF) is a binding site for substrate. FMN is bound by residues N138 and N171. N171 contacts substrate. The active-site Nucleophile is S174. Residue N176 coordinates substrate. 2 residues coordinate FMN: K216 and T244. Residue 245-246 (NT) coordinates substrate. Residues G267, G296, and 317-318 (YT) each bind FMN.

It belongs to the dihydroorotate dehydrogenase family. Type 2 subfamily. As to quaternary structure, monomer. FMN serves as cofactor.

It is found in the cell membrane. The catalysed reaction is (S)-dihydroorotate + a quinone = orotate + a quinol. It participates in pyrimidine metabolism; UMP biosynthesis via de novo pathway; orotate from (S)-dihydroorotate (quinone route): step 1/1. In terms of biological role, catalyzes the conversion of dihydroorotate to orotate with quinone as electron acceptor. The polypeptide is Dihydroorotate dehydrogenase (quinone) (Azotobacter vinelandii (strain DJ / ATCC BAA-1303)).